The sequence spans 193 residues: Interleukin-18 (193 aa).

Positions 1–36 (MAAEPVEDNCINFVAMKFIDNTLYFIAEDDENLESD) are excised as a propeptide.

This sequence belongs to the IL-1 family. Forms a ternary complex with ligand-binding receptor subunit IL18R1 and signaling receptor subunit IL18RAP at the plasma membrane. Mature IL18 first binds to IL18R1 forming a low affinity binary complex, which then interacts with IL18RAP to form a high affinity ternary complex that signals inside the cell. Interacts with cargo receptor TMED10; the interaction mediates the translocation from the cytoplasm into the ERGIC (endoplasmic reticulum-Golgi intermediate compartment) and thereby secretion. The pro-IL-18 precursor is processed by CASP1, CASP4 or CASP5 to yield its mature, active form. The pro-IL-18 precursor features autoinhibitory interactions between the propeptide and the post-cleavage-site region, preventing recognition by the IL18R1 receptor. Processing by CASP1, CASP4 or CASP5 induces conformational changes to generate critical receptor-binding sites. The mature form is then secreted and released in the extracellular milieu by passing through the gasdermin-D (GSDMD) pore. In contrast, cleavage by CASP3 inactivates IL18. As to expression, expressed in ovarian carcinoma but undetectable in normal ovarian epithelial cells. Resistant to proteolytic activation by caspase-1 and -4.

The protein resides in the cytoplasm. It localises to the cytosol. It is found in the secreted. In terms of biological role, pro-inflammatory cytokine primarily involved in epithelial barrier repair, polarized T-helper 1 (Th1) cell and natural killer (NK) cell immune responses. Upon binding to IL18R1 and IL18RAP, forms a signaling ternary complex which activates NF-kappa-B, triggering synthesis of inflammatory mediators. Synergizes with IL12/interleukin-12 to induce IFNG synthesis from T-helper 1 (Th1) cells and natural killer (NK) cells. Involved in transduction of inflammation downstream of pyroptosis: its mature form is specifically released in the extracellular milieu by passing through the gasdermin-D (GSDMD) pore. This Homo sapiens (Human) protein is Interleukin-18.